The sequence spans 278 residues: Shikimate dehydrogenase (NADP(+)) (278 aa).

Shikimate is bound by residues 19–21 (SRS) and T66. K70 functions as the Proton acceptor in the catalytic mechanism. An NADP(+)-binding site is contributed by D82. Residues N91 and D107 each coordinate shikimate. NADP(+) contacts are provided by residues 133-137 (GAGGA), 157-162 (NRTRAK), and I222. A shikimate-binding site is contributed by Y224. G245 lines the NADP(+) pocket.

This sequence belongs to the shikimate dehydrogenase family. As to quaternary structure, homodimer.

It catalyses the reaction shikimate + NADP(+) = 3-dehydroshikimate + NADPH + H(+). It participates in metabolic intermediate biosynthesis; chorismate biosynthesis; chorismate from D-erythrose 4-phosphate and phosphoenolpyruvate: step 4/7. Its function is as follows. Involved in the biosynthesis of the chorismate, which leads to the biosynthesis of aromatic amino acids. Catalyzes the reversible NADPH linked reduction of 3-dehydroshikimate (DHSA) to yield shikimate (SA). The chain is Shikimate dehydrogenase (NADP(+)) from Dinoroseobacter shibae (strain DSM 16493 / NCIMB 14021 / DFL 12).